Here is a 199-residue protein sequence, read N- to C-terminus: NAD(P)H-quinone oxidoreductase subunit 6, chloroplastic (199 aa).

A run of 5 helical transmembrane segments spans residues 13-33, 35-55, 64-84, 96-118, and 157-177; these read AILL…VLFT, IVYS…LYIL, VQIL…VMLI, WTVG…IAAI, and LPFE…ITMA.

This sequence belongs to the complex I subunit 6 family. In terms of assembly, NDH is composed of at least 16 different subunits, 5 of which are encoded in the nucleus.

It is found in the plastid. Its subcellular location is the chloroplast thylakoid membrane. It carries out the reaction a plastoquinone + NADH + (n+1) H(+)(in) = a plastoquinol + NAD(+) + n H(+)(out). It catalyses the reaction a plastoquinone + NADPH + (n+1) H(+)(in) = a plastoquinol + NADP(+) + n H(+)(out). Its function is as follows. NDH shuttles electrons from NAD(P)H:plastoquinone, via FMN and iron-sulfur (Fe-S) centers, to quinones in the photosynthetic chain and possibly in a chloroplast respiratory chain. The immediate electron acceptor for the enzyme in this species is believed to be plastoquinone. Couples the redox reaction to proton translocation, and thus conserves the redox energy in a proton gradient. This is NAD(P)H-quinone oxidoreductase subunit 6, chloroplastic (ndhG) from Huperzia lucidula (Shining clubmoss).